We begin with the raw amino-acid sequence, 612 residues long: Elongation factor 4 (612 aa).

The region spanning 11 to 193 (KHIRNFSIVA…EIVKKVPAPD (183 aa)) is the tr-type G domain. Residues 23-28 (DHGKST) and 140-143 (NKID) contribute to the GTP site.

It belongs to the TRAFAC class translation factor GTPase superfamily. Classic translation factor GTPase family. LepA subfamily.

The protein localises to the cell membrane. It carries out the reaction GTP + H2O = GDP + phosphate + H(+). In terms of biological role, required for accurate and efficient protein synthesis under certain stress conditions. May act as a fidelity factor of the translation reaction, by catalyzing a one-codon backward translocation of tRNAs on improperly translocated ribosomes. Back-translocation proceeds from a post-translocation (POST) complex to a pre-translocation (PRE) complex, thus giving elongation factor G a second chance to translocate the tRNAs correctly. Binds to ribosomes in a GTP-dependent manner. This chain is Elongation factor 4, found in Lactobacillus johnsonii (strain CNCM I-12250 / La1 / NCC 533).